Reading from the N-terminus, the 338-residue chain is GTPase Obg (338 aa).

Positions 1-159 (MKFIDEVTLF…AKLRLELKLM (159 aa)) constitute an Obg domain. Residues 160-331 (ADVGLLGLPN…LLDEIARRLW (172 aa)) form the OBG-type G domain. Residues 166–173 (GLPNAGKS), 191–195 (FTTIK), 213–216 (DIPG), 283–286 (TKLD), and 312–314 (SSA) contribute to the GTP site. Residues Ser-173 and Thr-193 each coordinate Mg(2+).

This sequence belongs to the TRAFAC class OBG-HflX-like GTPase superfamily. OBG GTPase family. As to quaternary structure, monomer. The cofactor is Mg(2+).

It is found in the cytoplasm. Functionally, an essential GTPase which binds GTP, GDP and possibly (p)ppGpp with moderate affinity, with high nucleotide exchange rates and a fairly low GTP hydrolysis rate. Plays a role in control of the cell cycle, stress response, ribosome biogenesis and in those bacteria that undergo differentiation, in morphogenesis control. In Pelobacter propionicus (strain DSM 2379 / NBRC 103807 / OttBd1), this protein is GTPase Obg.